Consider the following 170-residue polypeptide: Ribosome maturation factor RimM (170 aa).

In terms of domain architecture, PRC barrel spans 97 to 170 (KNEFYWTDLI…QIRVEWGSDW (74 aa)).

This sequence belongs to the RimM family. As to quaternary structure, binds ribosomal protein uS19.

Its subcellular location is the cytoplasm. An accessory protein needed during the final step in the assembly of 30S ribosomal subunit, possibly for assembly of the head region. Essential for efficient processing of 16S rRNA. May be needed both before and after RbfA during the maturation of 16S rRNA. It has affinity for free ribosomal 30S subunits but not for 70S ribosomes. The protein is Ribosome maturation factor RimM of Dechloromonas aromatica (strain RCB).